The primary structure comprises 210 residues: Large ribosomal subunit protein uL4 (210 aa).

The tract at residues 46 to 77 (QGTHKSKERGEIAGSTKKIKKQKGTGTARAGS) is disordered.

It belongs to the universal ribosomal protein uL4 family. As to quaternary structure, part of the 50S ribosomal subunit.

Its function is as follows. One of the primary rRNA binding proteins, this protein initially binds near the 5'-end of the 23S rRNA. It is important during the early stages of 50S assembly. It makes multiple contacts with different domains of the 23S rRNA in the assembled 50S subunit and ribosome. Functionally, forms part of the polypeptide exit tunnel. The chain is Large ribosomal subunit protein uL4 from Amoebophilus asiaticus (strain 5a2).